The chain runs to 480 residues: Endothelial transcription factor GATA-2 (480 aa).

Position 73 is a phosphoserine (serine 73). Position 86 is an asymmetric dimethylarginine (arginine 86). The disordered stretch occupies residues 119–209; that stretch reads SPFSKTPLHP…GSAARGEDKD (91 aa). A compositionally biased stretch (gly residues) spans 143–153; sequence GAGGGSGGGSG. Over residues 185–203 the composition is skewed to low complexity; that stretch reads PSTTGAASPASSSAGGSAA. The residue at position 192 (serine 192) is a Phosphoserine. 2 consecutive GATA-type zinc fingers follow at residues 295 to 319 and 349 to 373; these read CVNC…CNAC and CANC…CNAC. Lysine 389 participates in a covalent cross-link: Glycyl lysine isopeptide (Lys-Gly) (interchain with G-Cter in SUMO2). The disordered stretch occupies residues 448–480; it reads HSGHILPTPTPIHPSSSLSFGHPHPSSMVTAMG.

In terms of assembly, interacts with BRD3. Interacts with AR and CCAR1. Interacts with MDFIC. In terms of tissue distribution, endothelial cells.

It is found in the nucleus. Functionally, transcriptional activator which regulates endothelin-1 gene expression in endothelial cells. Binds to the consensus sequence 5'-AGATAG-3'. The polypeptide is Endothelial transcription factor GATA-2 (GATA2) (Homo sapiens (Human)).